The sequence spans 137 residues: Ribosome-binding factor A (137 aa).

It belongs to the RbfA family. In terms of assembly, monomer. Binds 30S ribosomal subunits, but not 50S ribosomal subunits or 70S ribosomes.

It localises to the cytoplasm. Its function is as follows. One of several proteins that assist in the late maturation steps of the functional core of the 30S ribosomal subunit. Associates with free 30S ribosomal subunits (but not with 30S subunits that are part of 70S ribosomes or polysomes). Required for efficient processing of 16S rRNA. May interact with the 5'-terminal helix region of 16S rRNA. This chain is Ribosome-binding factor A, found in Cereibacter sphaeroides (strain ATCC 17029 / ATH 2.4.9) (Rhodobacter sphaeroides).